Reading from the N-terminus, the 518-residue chain is Glutamate--cysteine ligase (518 aa).

The protein belongs to the glutamate--cysteine ligase type 1 family. Type 1 subfamily.

It catalyses the reaction L-cysteine + L-glutamate + ATP = gamma-L-glutamyl-L-cysteine + ADP + phosphate + H(+). Its pathway is sulfur metabolism; glutathione biosynthesis; glutathione from L-cysteine and L-glutamate: step 1/2. The sequence is that of Glutamate--cysteine ligase from Escherichia coli O157:H7.